A 181-amino-acid chain; its full sequence is Der GTPase-activating protein YihI (181 aa).

Disordered stretches follow at residues 1–75 (MSRK…KKIP) and 145–181 (EPEAEEEFEDEAPVRKSRSDDDLLADFEDFDMDDYKG). Residues 32 to 43 (RLRKKDKKRKGL) are compositionally biased toward basic residues. Positions 146 to 155 (PEAEEEFEDE) are enriched in acidic residues. A compositionally biased stretch (basic and acidic residues) spans 156–165 (APVRKSRSDD). A compositionally biased stretch (acidic residues) spans 166–181 (DLLADFEDFDMDDYKG).

Belongs to the YihI family. Interacts with Der.

Functionally, a GTPase-activating protein (GAP) that modifies Der/EngA GTPase function. May play a role in ribosome biogenesis. The protein is Der GTPase-activating protein YihI of Vibrio vulnificus (strain YJ016).